The chain runs to 286 residues: Acetyl-coenzyme A carboxylase carboxyl transferase subunit beta (286 aa).

A CoA carboxyltransferase N-terminal domain is found at 23–286 (IWVKCNNCNQ…ITNKPEPKKE (264 aa)). Residues Cys-27, Cys-30, Cys-46, and Cys-49 each contribute to the Zn(2+) site. The segment at 27–49 (CNNCNQMIYKIELEKNLEVCPKC) adopts a C4-type zinc-finger fold.

This sequence belongs to the AccD/PCCB family. Acetyl-CoA carboxylase is a heterohexamer composed of biotin carboxyl carrier protein (AccB), biotin carboxylase (AccC) and two subunits each of ACCase subunit alpha (AccA) and ACCase subunit beta (AccD). Requires Zn(2+) as cofactor.

It is found in the cytoplasm. The catalysed reaction is N(6)-carboxybiotinyl-L-lysyl-[protein] + acetyl-CoA = N(6)-biotinyl-L-lysyl-[protein] + malonyl-CoA. The protein operates within lipid metabolism; malonyl-CoA biosynthesis; malonyl-CoA from acetyl-CoA: step 1/1. Component of the acetyl coenzyme A carboxylase (ACC) complex. Biotin carboxylase (BC) catalyzes the carboxylation of biotin on its carrier protein (BCCP) and then the CO(2) group is transferred by the transcarboxylase to acetyl-CoA to form malonyl-CoA. The protein is Acetyl-coenzyme A carboxylase carboxyl transferase subunit beta of Wigglesworthia glossinidia brevipalpis.